The following is a 913-amino-acid chain: Anoctamin-5 (913 aa).

Residues 1 to 299 (MGDPDLLEVL…DLIKNYYGEK (299 aa)) are Cytoplasmic-facing. Residues 300 to 320 (IGIYFVFLGFYTEMLFFAAVV) form a helical membrane-spanning segment. The Extracellular portion of the chain corresponds to 321–380 (GLACFIYGLLSMEHNTSSTEICDPEIGGQMIMCPLCDQVCDYWRLNSTCLASKFSHLFDN). N335, N366, and N380 each carry an N-linked (GlcNAc...) asparagine glycan. Residues 381–401 (ESTVFFAIFMGIWVTLFLEFW) form a helical membrane-spanning segment. Residues 402–462 (KQRQARLEYE…YTRIPWYFLS (61 aa)) lie on the Cytoplasmic side of the membrane. Residues 463-483 (GATVTLWMSLVVTSMVAVIVY) traverse the membrane as a helical segment. Residues 484–511 (RLSVFATFASFMESDASLKQVKSFLTPQ) lie on the Extracellular side of the membrane. Residues 512-532 (ITTSLTGSCLNFIVILILNFF) traverse the membrane as a helical segment. The Cytoplasmic segment spans residues 533–557 (YEKISAWITKMEIPRTYQEYESSLT). Residues 558 to 578 (LKMFLFQFVNFYSSCFYVAFF) form a helical membrane-spanning segment. At 579-679 (KGKFVGYPGK…FYEYLETVTQ (101 aa)) the chain is on the extracellular side. The chain crosses the membrane as a helical span at residues 680–700 (FGFVTLFVASFPLAPLLALIN). Residues 701 to 732 (NIVEIRVDAWKLTTQYRRTVASKAHSIGVWQD) lie on the Cytoplasmic side of the membrane. A helical membrane pass occupies residues 733-753 (ILYGMAVLSVATNAFIVAFTS). The Extracellular segment spans residues 754-834 (DIIPRLVYYY…FWHVLAAKMT (81 aa)). N768, N778, and N791 each carry an N-linked (GlcNAc...) asparagine glycan. Residues 835–855 (FIIVMEHVVFLVKFLLAWMIP) traverse the membrane as a helical segment. Residues 856-913 (DVPKDVVERIKREKLMTIKILHDFELNKLKENLGINSNEFAKHVMIEENKAQLAKSTL) are Cytoplasmic-facing.

Belongs to the anoctamin family. Highly expressed in brain, heart, kidney, lung, and skeletal muscle. Weakly expressed in bone marrow, fetal liver, placenta, spleen, thymus, osteoblasts and periodontal ligament cells.

It localises to the endoplasmic reticulum membrane. Its subcellular location is the cell membrane. Functionally, plays a role in plasma membrane repair in a process involving annexins. Does not exhibit calcium-activated chloride channel (CaCC) activity. In Homo sapiens (Human), this protein is Anoctamin-5 (ANO5).